A 493-amino-acid polypeptide reads, in one-letter code: ATP-dependent RNA helicase dbp3 (493 aa).

Residues 1-38 are disordered; it reads MTKRDYQNDTTAESRPTKKSKGEKKVKETKEKKEKKVK. A compositionally biased stretch (basic and acidic residues) spans 23-34; sequence EKKVKETKEKKE. The Q motif motif lies at 97–105; that stretch reads SFKSPTSIQ. The Helicase ATP-binding domain occupies 109 to 285; sequence WPLLFGGRDV…STFMSSPVTV (177 aa). 122–129 contacts ATP; that stretch reads AETGSGKT. A DEAD box motif is present at residues 232–235; that stretch reads DEAD. A Helicase C-terminal domain is found at 316-462; sequence RLVQLLKQHQ…EVPEELLKFG (147 aa).

Belongs to the DEAD box helicase family. DDX5/DBP2 subfamily.

It is found in the nucleus. Its subcellular location is the nucleolus. The catalysed reaction is ATP + H2O = ADP + phosphate + H(+). Its function is as follows. ATP-dependent RNA helicase required for 60S ribosomal subunit synthesis. Involved in efficient pre-rRNA processing, predominantly at site A3, which is necessary for the normal formation of 25S and 5.8S rRNAs. In Aspergillus terreus (strain NIH 2624 / FGSC A1156), this protein is ATP-dependent RNA helicase dbp3 (dbp3).